We begin with the raw amino-acid sequence, 83 residues long: Cytochrome b559 subunit alpha (83 aa).

A helical transmembrane segment spans residues 21-35; the sequence is VIHSITIPSLFIAGW. Residue His23 participates in heme binding.

Belongs to the PsbE/PsbF family. In terms of assembly, heterodimer of an alpha subunit and a beta subunit. PSII is composed of 1 copy each of membrane proteins PsbA, PsbB, PsbC, PsbD, PsbE, PsbF, PsbH, PsbI, PsbJ, PsbK, PsbL, PsbM, PsbT, PsbX, PsbY, PsbZ, Psb30/Ycf12, at least 3 peripheral proteins of the oxygen-evolving complex and a large number of cofactors. It forms dimeric complexes. Requires heme b as cofactor.

It localises to the plastid. Its subcellular location is the chloroplast thylakoid membrane. This b-type cytochrome is tightly associated with the reaction center of photosystem II (PSII). PSII is a light-driven water:plastoquinone oxidoreductase that uses light energy to abstract electrons from H(2)O, generating O(2) and a proton gradient subsequently used for ATP formation. It consists of a core antenna complex that captures photons, and an electron transfer chain that converts photonic excitation into a charge separation. This Chlorella vulgaris (Green alga) protein is Cytochrome b559 subunit alpha.